Reading from the N-terminus, the 238-residue chain is ATP synthase subunit a (238 aa).

Transmembrane regions (helical) follow at residues 18–38, 76–96, 114–134, 150–170, 188–208, and 211–231; these read TTNLISGLVSALIVFCVVFAL, FGLYAFTLFLFIFVSNQIGLF, PIVTLTLSLITMMLAHYSGVA, FKVWLPIGVFTEFIDFLTLGL, GIAFSGGIVNMIVAIPLALIW, and FSVFLGSIQAFVFVTLTSVYI.

This sequence belongs to the ATPase A chain family. As to quaternary structure, F-type ATPases have 2 components, CF(1) - the catalytic core - and CF(0) - the membrane proton channel. CF(1) has five subunits: alpha(3), beta(3), gamma(1), delta(1), epsilon(1). CF(0) has three main subunits: a(1), b(2) and c(9-12). The alpha and beta chains form an alternating ring which encloses part of the gamma chain. CF(1) is attached to CF(0) by a central stalk formed by the gamma and epsilon chains, while a peripheral stalk is formed by the delta and b chains.

It localises to the cell membrane. In terms of biological role, key component of the proton channel; it plays a direct role in the translocation of protons across the membrane. In Pediococcus pentosaceus (strain ATCC 25745 / CCUG 21536 / LMG 10740 / 183-1w), this protein is ATP synthase subunit a.